Reading from the N-terminus, the 1496-residue chain is Carbamoyl-phosphate synthase [ammonia], mitochondrial (1496 aa).

Residues 1 to 33 (MTRILSVFKTAKTGVLNAAAHRYRGFSKAGVRL) constitute a mitochondrion transit peptide. An anthranilate phosphoribosyltransferase homolog region spans residues 34–214 (MSVKAQTANL…TKVFGKGNPV (181 aa)). Residues 215–401 (RIVAVDCGVK…MSLIKKGKGT (187 aa)) form the Glutamine amidotransferase type-1 domain. The active-site For GATase activity is the Cys-290. ATP-grasp domains follow at residues 548 to 740 (SDKL…KIAL) and 1090 to 1281 (SAVL…KVMI). The MGS-like domain occupies 1352-1496 (FKLPQKGILI…YRQFGGAKPS (145 aa)). Residues Thr-1388, Thr-1391, Trp-1407, Asn-1433, Asn-1436, and Asn-1445 each contribute to the N-acetyl-L-glutamate site.

The protein localises to the mitochondrion. The enzyme catalyses hydrogencarbonate + NH4(+) + 2 ATP = carbamoyl phosphate + 2 ADP + phosphate + 2 H(+). Its activity is regulated as follows. Requires N-acetyl-L-glutamate (NAG) as an allosteric activator. In terms of biological role, involved in the urea cycle of ureotelic animals where the enzyme plays an important role in removing excess ammonia from the cell. This chain is Carbamoyl-phosphate synthase [ammonia], mitochondrial, found in Aquarana catesbeiana (American bullfrog).